The following is a 174-amino-acid chain: ATP-dependent protease subunit HslV (174 aa).

Residue threonine 2 is part of the active site. Na(+) contacts are provided by glycine 157, cysteine 160, and threonine 163.

Belongs to the peptidase T1B family. HslV subfamily. In terms of assembly, a double ring-shaped homohexamer of HslV is capped on each side by a ring-shaped HslU homohexamer. The assembly of the HslU/HslV complex is dependent on binding of ATP.

The protein resides in the cytoplasm. It carries out the reaction ATP-dependent cleavage of peptide bonds with broad specificity.. With respect to regulation, allosterically activated by HslU binding. In terms of biological role, protease subunit of a proteasome-like degradation complex believed to be a general protein degrading machinery. The sequence is that of ATP-dependent protease subunit HslV from Shewanella halifaxensis (strain HAW-EB4).